A 205-amino-acid chain; its full sequence is Holliday junction branch migration complex subunit RuvA (205 aa).

The domain I stretch occupies residues 1–62 (MFEYVTGYVE…EDIMALYGFK (62 aa)). The domain II stretch occupies residues 63–141 (TREERLLFTK…DVVPDAFVDL (79 aa)). The interval 142-152 (FSDTESFDTKK) is flexible linker. The interval 153 to 205 (GSSVELDEALEALRALGYAEREVSRVVPELLKESLTTDQYIKKALSLLLNGKR) is domain III.

It belongs to the RuvA family. As to quaternary structure, homotetramer. Forms an RuvA(8)-RuvB(12)-Holliday junction (HJ) complex. HJ DNA is sandwiched between 2 RuvA tetramers; dsDNA enters through RuvA and exits via RuvB. An RuvB hexamer assembles on each DNA strand where it exits the tetramer. Each RuvB hexamer is contacted by two RuvA subunits (via domain III) on 2 adjacent RuvB subunits; this complex drives branch migration. In the full resolvosome a probable DNA-RuvA(4)-RuvB(12)-RuvC(2) complex forms which resolves the HJ.

It localises to the cytoplasm. Functionally, the RuvA-RuvB-RuvC complex processes Holliday junction (HJ) DNA during genetic recombination and DNA repair, while the RuvA-RuvB complex plays an important role in the rescue of blocked DNA replication forks via replication fork reversal (RFR). RuvA specifically binds to HJ cruciform DNA, conferring on it an open structure. The RuvB hexamer acts as an ATP-dependent pump, pulling dsDNA into and through the RuvAB complex. HJ branch migration allows RuvC to scan DNA until it finds its consensus sequence, where it cleaves and resolves the cruciform DNA. This chain is Holliday junction branch migration complex subunit RuvA, found in Bacillus mycoides (strain KBAB4) (Bacillus weihenstephanensis).